The following is a 622-amino-acid chain: Palmitoyltransferase ZDHHC13 (622 aa).

Residue Met-1 is modified to N-acetylmethionine. The Cytoplasmic segment spans residues 1–291; that stretch reads MEGPGLGSQC…RLWRWLHKCE (291 aa). ANK repeat units lie at residues 43-78, 81-110, 115-144, 148-177, 181-211, 216-245, and 249-277; these read PLIE…VRQP, ENVS…VIDQ, LNST…DPTL, EGFS…SVNM, NGQT…SLSV, HQNT…SLDI, and KGET…KMRA. Residues 292–312 traverse the membrane as a helical segment; that stretch reads LFLLLILSMITLWAVGYILDF. At 313–320 the chain is on the lumenal side; the sequence is NSDSWLLK. A helical membrane pass occupies residues 321–341; sequence GCLLVALFFLTSLFPRFLVGY. Topologically, residues 342 to 347 are cytoplasmic; that stretch reads KNLVYL. Residues 348 to 368 form a helical membrane-spanning segment; that stretch reads PTVFLLSSIFWIFMTWFILFF. Residues 369 to 371 lie on the Lumenal side of the membrane; the sequence is PDT. A helical membrane pass occupies residues 372 to 392; sequence AGSPLYFAFIFSIMAFLYFFY. Topologically, residues 393–470 are cytoplasmic; it reads KTWATDPGFT…RCIGFGNHHH (78 aa). In terms of domain architecture, DHHC spans 426-476; it reads TFCTSCLIRKPLRSLHCHVCNSCVARFDQHCFWTGRCIGFGNHHHYIFFLL. The S-palmitoyl cysteine intermediate role is filled by Cys-456. A helical membrane pass occupies residues 471-491; that stretch reads YIFFLLSLSMVCDWIIYGSFV. The Lumenal segment spans residues 492 to 518; that stretch reads YWSNHCATTFKEDGLWTYLNQIVACSP. The chain crosses the membrane as a helical span at residues 519–539; it reads WVLYIFMLAAFHFSWSTFLLI. Topologically, residues 540 to 622 are cytoplasmic; it reads NQLFQIAFLG…PAKEKVLRSV (83 aa).

Belongs to the DHHC palmitoyltransferase family. AKR/ZDHHC17 subfamily. In terms of assembly, interacts (via ANK repeats) with CLIP3. Interacts (via ANK repeats) with DNAJC5 (via C-terminus). Interacts (via ANK repeats) with HTT. Interacts (via ANK repeats) with MAP6. Interacts (via ANK repeats) with SNAP23. Interacts (via ANK repeats) with SNAP25. May interact (via ANK repeats) with SPRED2. In terms of tissue distribution, expressed in most adult tissues, but at low levels in the liver, skin, and lung.

The protein localises to the golgi apparatus membrane. It localises to the cytoplasmic vesicle membrane. It carries out the reaction L-cysteinyl-[protein] + hexadecanoyl-CoA = S-hexadecanoyl-L-cysteinyl-[protein] + CoA. Functionally, palmitoyltransferase that could catalyze the addition of palmitate onto various protein substrates. Palmitoyltransferase for HTT and GAD2. May play a role in Mg(2+) transport. This is Palmitoyltransferase ZDHHC13 from Mus musculus (Mouse).